Consider the following 199-residue polypeptide: Chorismate pyruvate-lyase (199 aa).

It belongs to the chorismate pyruvate-lyase type 2 family.

The enzyme catalyses chorismate = 4-hydroxybenzoate + pyruvate. Its function is as follows. Removes the pyruvyl group from chorismate to provide 4-hydroxybenzoate (4HB). Involved in the synthesis of glycosylated p-hydroxybenzoic acid methyl esters (p-HBADs) and phenolic glycolipids (PGL) that play important roles in the pathogenesis of mycobacterial infections. The protein is Chorismate pyruvate-lyase of Mycobacterium bovis (strain ATCC BAA-935 / AF2122/97).